A 111-amino-acid chain; its full sequence is Ribulose bisphosphate carboxylase small subunit (111 aa).

This sequence belongs to the RuBisCO small chain family. As to quaternary structure, heterohexadecamer of 8 large and 8 small subunits. The CcmM short form purifies from carboxysomes in complex with both RuBisCO subunits; a second complex with full-length CcmM and RuBisCO also includes carbonic anhydrase (CA, ccaA). RuBisCO-CcmM complexes are probably associated with the carboxysome shell. Isolated reduced and oxidized SSUL1 binds holo-RuBisCO (RbcL(8)-RbcS(8)) but not either subunit octamer alone; RuBisCO has a higher affinity for reduced SSUL1.

Its subcellular location is the carboxysome. Functionally, ruBisCO catalyzes two reactions: the carboxylation of D-ribulose 1,5-bisphosphate, the primary event in carbon dioxide fixation, as well as the oxidative fragmentation of the pentose substrate in the photorespiration process. Both reactions occur simultaneously and in competition at the same active site. Its function is as follows. Beta-carboxysome assembly initiates when soluble RuBisCO aggregates is condensed into a liquid matrix in a pre-carboxysome by the RbcS-like domains of probably both CcmM58 and CcmM35. CcmN interacts with the N-terminus of CcmM58, and then recruits the CcmK2 major shell protein via CcmN's encapsulation peptide. Shell formation requires CcmK proteins and CcmO. CcmL caps the otherwise elongated carboxysome. Once fully encapsulated carboxysomes are formed, they migrate within the cell probably via interactions with the cytoskeleton. The polypeptide is Ribulose bisphosphate carboxylase small subunit (Synechococcus elongatus (strain ATCC 33912 / PCC 7942 / FACHB-805) (Anacystis nidulans R2)).